A 280-amino-acid chain; its full sequence is MSTHFLGKVKFDEARLAEDLSTLEVAEFSSAYSDFACGKWEACVLRNRTGMQEEDIVVSHNAPALATPLSKSLPYLNELVETHFDCSAVRYTRIVRVSENACIIPHSDYLELDETFTRLHLVLDTNSGCANTEEDKIFHMGLGEIWFLDAMLPHSAACFSKTPRLHLMIDFEATAFPESFLRNVEQPVTTRDMVDPRKELTDEVIEGILGFSIIISEANYREIVSILAKLHFFYKADCRSMYDWLKEICKRRGDPALIEKTASLERFFLGHRERGEVMTY.

Residues histidine 106, aspartate 108, and histidine 154 each coordinate Fe cation. Arginine 164 contacts 2-oxoglutarate.

The protein belongs to the L-proline cis-4-/cis-3-hydroxylase family. The cofactor is Fe(2+).

It catalyses the reaction L-proline + 2-oxoglutarate + O2 = cis-4-hydroxy-L-proline + succinate + CO2. Inhibited by metal ions such as Co(2+), Zn(2+), Cu(2+) or Ni(2+). Is also inhibited by EDTA or diethylpyrocarbonate (DEPC) in vitro. Unlike the procollagen-proline cis-3- and trans-4-hydroxylases from mammals, does not necessarily require L-ascorbate for activity although it does increase the activity of the enzyme. Functionally, dioxygenase that catalyzes the 2-oxoglutarate-dependent selective hydroxylation of free L-proline to cis-4-hydroxy-L-proline (cis-4-Hyp). The sequence is that of L-proline cis-4-hydroxylase from Rhizobium meliloti (strain 1021) (Ensifer meliloti).